The following is a 397-amino-acid chain: CCA-adding enzyme (397 aa).

2 residues coordinate ATP: Gly-8 and Arg-11. Gly-8 and Arg-11 together coordinate CTP. Residues Glu-21 and Asp-23 each contribute to the Mg(2+) site. The ATP site is built by Arg-91, Arg-137, and Arg-140. CTP contacts are provided by Arg-91, Arg-137, and Arg-140. Positions 213–324 (NLDAAIATLK…LALFNGCDAW (112 aa)) constitute an HD domain.

Belongs to the tRNA nucleotidyltransferase/poly(A) polymerase family. Bacterial CCA-adding enzyme type 2 subfamily. It depends on Mg(2+) as a cofactor.

It carries out the reaction a tRNA precursor + 2 CTP + ATP = a tRNA with a 3' CCA end + 3 diphosphate. The catalysed reaction is a tRNA with a 3' CCA end + 2 CTP + ATP = a tRNA with a 3' CCACCA end + 3 diphosphate. Its function is as follows. Catalyzes the addition and repair of the essential 3'-terminal CCA sequence in tRNAs without using a nucleic acid template. Adds these three nucleotides in the order of C, C, and A to the tRNA nucleotide-73, using CTP and ATP as substrates and producing inorganic pyrophosphate. tRNA 3'-terminal CCA addition is required both for tRNA processing and repair. Also involved in tRNA surveillance by mediating tandem CCA addition to generate a CCACCA at the 3' terminus of unstable tRNAs. While stable tRNAs receive only 3'-terminal CCA, unstable tRNAs are marked with CCACCA and rapidly degraded. This chain is CCA-adding enzyme, found in Alteromonas mediterranea (strain DSM 17117 / CIP 110805 / LMG 28347 / Deep ecotype).